Consider the following 328-residue polypeptide: 2-hydroxyisoflavanone dehydratase (328 aa).

An Involved in the stabilization of the negatively charged intermediate by the formation of the oxyanion hole motif is present at residues 85 to 87 (HGG). Catalysis depends on residues Thr173, Asp272, and His304.

This sequence belongs to the 'GDXG' lipolytic enzyme family.

It carries out the reaction (2R,3S)-2,4',7-trihydroxyisoflavanone = daidzein + H2O + H(+). It catalyses the reaction 2-hydroxy-2,3-dihydrogenistein = genistein + H2O + H(+). The enzyme catalyses a carboxylic ester + H2O = an alcohol + a carboxylate + H(+). The protein operates within secondary metabolite biosynthesis; flavonoid biosynthesis. Its function is as follows. Dehydratase that mediates the biosynthesis of isoflavonoids. Can better use 2,7-dihydroxy-4'-methoxyisoflavanone as substrate. Has also a slight carboxylesterase activity toward p-nitrophenyl butyrate. The protein is 2-hydroxyisoflavanone dehydratase (HIDM) of Glycyrrhiza echinata (Licorice).